The primary structure comprises 157 residues: MGSNYLKLTFDKLDVGEINELVAHESCGAVALFVGTTRDNFDGKEVVLLQYEAYEAMALKSMNHICEELRGRWTDLVHIGIHHRLGTVPVKEASVVIAISSPHREAALEAVRWAIDELKKSVPVWKKEQYAEGQGCSEWKENKECTWSKAYKDNHIL.

Residues 103 to 104 (HR), lysine 119, and 126 to 128 (KKE) each bind substrate.

The protein belongs to the MoaE family. MOCS2B subfamily. In terms of assembly, heterotetramer; composed of 2 small (MOCS2A) and 2 large (MOCS2B) subunits.

It is found in the cytoplasm. It catalyses the reaction 2 [molybdopterin-synthase sulfur-carrier protein]-C-terminal-Gly-aminoethanethioate + cyclic pyranopterin phosphate + H2O = molybdopterin + 2 [molybdopterin-synthase sulfur-carrier protein]-C-terminal Gly-Gly + 2 H(+). The protein operates within cofactor biosynthesis; molybdopterin biosynthesis. Catalytic subunit of the molybdopterin synthase complex, a complex that catalyzes the conversion of precursor Z into molybdopterin. Acts by mediating the incorporation of 2 sulfur atoms from thiocarboxylated MOCS2A into precursor Z to generate a dithiolene group. The chain is Molybdopterin synthase catalytic subunit from Culex quinquefasciatus (Southern house mosquito).